Reading from the N-terminus, the 577-residue chain is Isocitrate dehydrogenase kinase/phosphatase (577 aa).

ATP-binding positions include 324-330 (APGIRGL) and Lys345. Asp380 is an active-site residue.

Belongs to the AceK family.

The protein resides in the cytoplasm. It carries out the reaction L-seryl-[isocitrate dehydrogenase] + ATP = O-phospho-L-seryl-[isocitrate dehydrogenase] + ADP + H(+). In terms of biological role, bifunctional enzyme which can phosphorylate or dephosphorylate isocitrate dehydrogenase (IDH) on a specific serine residue. This is a regulatory mechanism which enables bacteria to bypass the Krebs cycle via the glyoxylate shunt in response to the source of carbon. When bacteria are grown on glucose, IDH is fully active and unphosphorylated, but when grown on acetate or ethanol, the activity of IDH declines drastically concomitant with its phosphorylation. The polypeptide is Isocitrate dehydrogenase kinase/phosphatase (Pseudoalteromonas atlantica (strain T6c / ATCC BAA-1087)).